We begin with the raw amino-acid sequence, 572 residues long: mRNA cap guanine-N(7) methyltransferase (572 aa).

Disordered regions lie at residues 1–75 (MPED…GSRV) and 110–140 (EKAI…FPSS). Basic and acidic residues-rich tracts occupy residues 24–39 (ANDG…RVHD) and 59–69 (SADENKDKKYD). The segment covering 123 to 140 (TTTTPSSTTSSSSSFPSS) has biased composition (low complexity). Residues 262-571 (SPIYKLRNFN…FYVAFVFEKV (310 aa)) enclose the mRNA cap 0 methyltransferase domain. Position 271 to 272 (271 to 272 (NN)) interacts with mRNA. S-adenosyl-L-methionine contacts are provided by K275, C302, D324, D366, Q396, and Y401.

It belongs to the class I-like SAM-binding methyltransferase superfamily. mRNA cap 0 methyltransferase family.

The protein localises to the nucleus. The catalysed reaction is a 5'-end (5'-triphosphoguanosine)-ribonucleoside in mRNA + S-adenosyl-L-methionine = a 5'-end (N(7)-methyl 5'-triphosphoguanosine)-ribonucleoside in mRNA + S-adenosyl-L-homocysteine. Responsible for methylating the 5'-cap structure of mRNAs. This chain is mRNA cap guanine-N(7) methyltransferase (ABD1), found in Lodderomyces elongisporus (strain ATCC 11503 / CBS 2605 / JCM 1781 / NBRC 1676 / NRRL YB-4239) (Yeast).